Consider the following 408-residue polypeptide: Argininosuccinate synthase (408 aa).

Residues 12–20 (AYSGGLDTS) and A39 each bind ATP. 2 residues coordinate L-citrulline: Y92 and S97. G122 contacts ATP. Residues T124, N128, and D129 each coordinate L-aspartate. Residue N128 coordinates L-citrulline. Positions 132, 183, 192, 268, and 280 each coordinate L-citrulline.

This sequence belongs to the argininosuccinate synthase family. Type 1 subfamily. Homotetramer.

It localises to the cytoplasm. The enzyme catalyses L-citrulline + L-aspartate + ATP = 2-(N(omega)-L-arginino)succinate + AMP + diphosphate + H(+). Its pathway is amino-acid biosynthesis; L-arginine biosynthesis; L-arginine from L-ornithine and carbamoyl phosphate: step 2/3. The polypeptide is Argininosuccinate synthase (Caulobacter vibrioides (strain ATCC 19089 / CIP 103742 / CB 15) (Caulobacter crescentus)).